A 132-amino-acid polypeptide reads, in one-letter code: Large ribosomal subunit protein uL14 (132 aa).

It belongs to the universal ribosomal protein uL14 family. Part of the 50S ribosomal subunit. Forms a cluster with proteins L3 and L24e, part of which may contact the 16S rRNA in 2 intersubunit bridges.

Binds to 23S rRNA. Forms part of two intersubunit bridges in the 70S ribosome. This is Large ribosomal subunit protein uL14 from Archaeoglobus fulgidus (strain ATCC 49558 / DSM 4304 / JCM 9628 / NBRC 100126 / VC-16).